The following is a 473-amino-acid chain: AFENKLMKNYRFLGISTSSEGYITQIIGPVLDVAFPVGKMPNIFNSFIVKGQNPAGQSINVTCEVQQLLGNNKVRAVAMSATDGLMRGMEVIDTGAPLSVPVGEVTLGRIFNVLGEPVDNMGPVEATAKSPIHKPAPAFMDLETTVSIFETGIKVVDLLAPYRRGGKIGLFGGAGVGKTVLIMELINNIAKAHGGVSVFGGVGERTREGNDLYMEMKESKVINEENISESKVALVYGQMNEPPGARMRVGLTALTMAEYFRDVNKQDVLLFIDNIFRFVQAGSEVSALLGRMPSAVGYQPTLATEMGCLQERITSTKEGSITSIQAVYVPADDLTDPAPATTFAHLDATTVLSRGLAAKGIYPAVDPLDSTSTVLQPWIVGEEHYEVAQGVKQTLQRYKELQDIIAILGLDELSEQDRLLVARARKIERFLSQPFFVAEVFTGSPGKYVSLNETIRGFQNDFTGELDSLPEQA.

172–179 is a binding site for ATP; sequence GGAGVGKT.

Belongs to the ATPase alpha/beta chains family. In terms of assembly, F-type ATPases have 2 components, CF(1) - the catalytic core - and CF(0) - the membrane proton channel. CF(1) has five subunits: alpha(3), beta(3), gamma(1), delta(1), epsilon(1). CF(0) has four main subunits: a(1), b(1), b'(1) and c(9-12).

Its subcellular location is the plastid. The protein localises to the chloroplast thylakoid membrane. It carries out the reaction ATP + H2O + 4 H(+)(in) = ADP + phosphate + 5 H(+)(out). Produces ATP from ADP in the presence of a proton gradient across the membrane. The catalytic sites are hosted primarily by the beta subunits. The sequence is that of ATP synthase subunit beta, chloroplastic from Equisetum arvense (Field horsetail).